The following is a 143-amino-acid chain: Calcitonin (143 aa).

A signal peptide spans Met-1–Ala-25. The propeptide occupies Thr-26–Ala-84. The residue at position 42 (Ser-42) is a Phosphoserine. The interval Thr-62–Arg-86 is disordered. A compositionally biased stretch (acidic residues) spans Leu-65–Ser-78. The cysteines at positions 87 and 93 are disulfide-linked. The segment at Gly-112 to Asn-143 is disordered. Pro-118 carries the post-translational modification Proline amide. Positions Pro-118 to Ser-133 are enriched in basic and acidic residues. Residues Arg-122–Asn-143 constitute a propeptide that is removed on maturation.

This sequence belongs to the calcitonin family.

Its subcellular location is the secreted. Calcitonin is a peptide hormone that causes a rapid but short-lived drop in the level of calcium and phosphate in blood by promoting the incorporation of those ions in the bones. Calcitonin function is mediated by the calcitonin receptor/CALCR and the CALCR-RAMP2 (AMYR2) receptor complex. This is Calcitonin (CALCA) from Ovis aries (Sheep).